The chain runs to 306 residues: MNDYNHYFHFPREEWRKLEVSKDQILTAEELEEIRGLNDRISLQDISEIYLPLIKLIAIQYHEAIFIHGEKMEYLKKKESRAPFIIALAGSVAVGKSTTARVFKLMLDRWFSKTRQVELVTTDGFLYPNKVLEERGIMDKKGFPESYDRDRFAKFLTDLKANKEDVEIPLYSHFTYDVLDETRVIHNPDIVIIEGINVLQADQHESLFPSDFFDFSVYMDANESDIKKWYLERFFMLRETAFQDESSYFHPYTKISKQEAETFALGVWDTINGVNLKENIEKTKYRADLVLHKGTDHLISDIYLRK.

Position 90-97 (90-97 (GSVAVGKS)) interacts with ATP.

The protein belongs to the prokaryotic pantothenate kinase family.

It localises to the cytoplasm. The enzyme catalyses (R)-pantothenate + ATP = (R)-4'-phosphopantothenate + ADP + H(+). It functions in the pathway cofactor biosynthesis; coenzyme A biosynthesis; CoA from (R)-pantothenate: step 1/5. This chain is Pantothenate kinase, found in Listeria monocytogenes serotype 4a (strain HCC23).